We begin with the raw amino-acid sequence, 680 residues long: DNA-directed RNA polymerase subunit beta' (680 aa).

Positions 69, 71, 87, and 90 each coordinate Zn(2+). Mg(2+)-binding residues include Asp489, Asp491, and Asp493.

Belongs to the RNA polymerase beta' chain family. RpoC1 subfamily. In terms of assembly, in plastids the minimal PEP RNA polymerase catalytic core is composed of four subunits: alpha, beta, beta', and beta''. When a (nuclear-encoded) sigma factor is associated with the core the holoenzyme is formed, which can initiate transcription. It depends on Mg(2+) as a cofactor. The cofactor is Zn(2+).

It is found in the plastid. It localises to the chloroplast. It catalyses the reaction RNA(n) + a ribonucleoside 5'-triphosphate = RNA(n+1) + diphosphate. Its function is as follows. DNA-dependent RNA polymerase catalyzes the transcription of DNA into RNA using the four ribonucleoside triphosphates as substrates. In Nandina domestica (Heavenly bamboo), this protein is DNA-directed RNA polymerase subunit beta'.